Here is a 260-residue protein sequence, read N- to C-terminus: ATP synthase subunit a (260 aa).

The propeptide at 1 to 11 is removed in mature form; it reads MQNTLLRTYIN. 6 helical membrane passes run 37-57, 96-116, 126-146, 152-172, 192-212, and 217-237; these read ITTFTLYTIIVLLVVSSLYVL, YFPFIYTLFMFILISNLISMI, FVFIISLSMIIWLGITILSLF, FFSLFVPSGTALPLVPLLVVI, IFSGHLLMAILAGLTMTFVQI, and LILGFIPLAIILIIMCLEFGI.

This sequence belongs to the ATPase A chain family. F-type ATPases have 2 components, CF(1) - the catalytic core - and CF(0) - the membrane proton channel. CF(1) has five subunits: alpha(3), beta(3), gamma(1), delta(1), epsilon(1). CF(0) has three main subunits: a, b and c.

The protein resides in the mitochondrion inner membrane. Its function is as follows. Mitochondrial membrane ATP synthase (F(1)F(0) ATP synthase or Complex V) produces ATP from ADP in the presence of a proton gradient across the membrane which is generated by electron transport complexes of the respiratory chain. F-type ATPases consist of two structural domains, F(1) - containing the extramembraneous catalytic core and F(0) - containing the membrane proton channel, linked together by a central stalk and a peripheral stalk. During catalysis, ATP synthesis in the catalytic domain of F(1) is coupled via a rotary mechanism of the central stalk subunits to proton translocation. Key component of the proton channel; it may play a direct role in the translocation of protons across the membrane. This is ATP synthase subunit a (ATP6) from Candida glabrata (strain ATCC 2001 / BCRC 20586 / JCM 3761 / NBRC 0622 / NRRL Y-65 / CBS 138) (Yeast).